A 484-amino-acid chain; its full sequence is Hexokinase-2 (484 aa).

The Hexokinase domain maps to 21–467 (PQLLEALKPI…SGVGAAVIAA (447 aa)). Residues 75 to 208 (TGKETGSYLA…GVPIDVVALI (134 aa)) are hexokinase small subdomain. The hexokinase large subdomain stretch occupies residues 209-456 (NDTTGTLVAS…DPIIIVPAED (248 aa)).

This sequence belongs to the hexokinase family. Monomer.

Its subcellular location is the cytoplasm. It catalyses the reaction a D-hexose + ATP = a D-hexose 6-phosphate + ADP + H(+). It carries out the reaction D-fructose + ATP = D-fructose 6-phosphate + ADP + H(+). The enzyme catalyses D-glucose + ATP = D-glucose 6-phosphate + ADP + H(+). The protein operates within carbohydrate metabolism; hexose metabolism. Its pathway is carbohydrate degradation; glycolysis; D-glyceraldehyde 3-phosphate and glycerone phosphate from D-glucose: step 1/4. Functionally, catalyzes the phosphorylation of hexose, such as D-glucose and D-fructose, to hexose 6-phosphate (D-glucose 6-phosphate and D-fructose 6-phosphate, respectively). Mediates the initial step of glycolysis by catalyzing phosphorylation of D-glucose to D-glucose 6-phosphate. This is Hexokinase-2 (HXK2) from Candida albicans (strain SC5314 / ATCC MYA-2876) (Yeast).